The chain runs to 402 residues: 1-deoxy-D-xylulose 5-phosphate reductoisomerase (402 aa).

NADPH is bound by residues Thr10, Gly11, Ser12, Ile13, Gly36, Arg37, Asn38, and Asn124. Lys125 is a binding site for 1-deoxy-D-xylulose 5-phosphate. Position 126 (Glu126) interacts with NADPH. Asp150 contacts Mn(2+). 1-deoxy-D-xylulose 5-phosphate contacts are provided by Ser151, Glu152, Ser186, and His209. Glu152 contacts Mn(2+). An NADPH-binding site is contributed by Gly215. Residues Ser222, Asn227, Lys228, and Glu231 each coordinate 1-deoxy-D-xylulose 5-phosphate. Glu231 contacts Mn(2+).

It belongs to the DXR family. Mg(2+) is required as a cofactor. Requires Mn(2+) as cofactor.

It carries out the reaction 2-C-methyl-D-erythritol 4-phosphate + NADP(+) = 1-deoxy-D-xylulose 5-phosphate + NADPH + H(+). It functions in the pathway isoprenoid biosynthesis; isopentenyl diphosphate biosynthesis via DXP pathway; isopentenyl diphosphate from 1-deoxy-D-xylulose 5-phosphate: step 1/6. Its activity is regulated as follows. Inhibited by fosmidomycin. Catalyzes the NADPH-dependent rearrangement and reduction of 1-deoxy-D-xylulose-5-phosphate (DXP) to 2-C-methyl-D-erythritol 4-phosphate (MEP). The protein is 1-deoxy-D-xylulose 5-phosphate reductoisomerase of Synechococcus sp. (strain ATCC 27144 / PCC 6301 / SAUG 1402/1) (Anacystis nidulans).